A 220-amino-acid polypeptide reads, in one-letter code: Deoxyribose-phosphate aldolase (220 aa).

The active-site Proton donor/acceptor is D89. K151 (schiff-base intermediate with acetaldehyde) is an active-site residue. K180 serves as the catalytic Proton donor/acceptor.

It belongs to the DeoC/FbaB aldolase family. DeoC type 1 subfamily.

The protein localises to the cytoplasm. It carries out the reaction 2-deoxy-D-ribose 5-phosphate = D-glyceraldehyde 3-phosphate + acetaldehyde. It participates in carbohydrate degradation; 2-deoxy-D-ribose 1-phosphate degradation; D-glyceraldehyde 3-phosphate and acetaldehyde from 2-deoxy-alpha-D-ribose 1-phosphate: step 2/2. In terms of biological role, catalyzes a reversible aldol reaction between acetaldehyde and D-glyceraldehyde 3-phosphate to generate 2-deoxy-D-ribose 5-phosphate. In Streptococcus pneumoniae serotype 4 (strain ATCC BAA-334 / TIGR4), this protein is Deoxyribose-phosphate aldolase.